The primary structure comprises 167 residues: uncharacterized protein (167 aa).

DED domains are found at residues 2 to 75 and 93 to 167; these read DLKT…NLFQ and THVL…AKTV.

This is an uncharacterized protein from Saimiriine herpesvirus 2 (strain 11) (SaHV-2).